The following is a 491-amino-acid chain: Sucrose transport protein SUC7 (491 aa).

The segment covering 1–13 (MSDLQANKDETTV) has biased composition (basic and acidic residues). Positions 1 to 25 (MSDLQANKDETTVDRQSSSSVDLDG) are disordered. Over 1–32 (MSDLQANKDETTVDRQSSSSVDLDGPSPLRKM) the chain is Cytoplasmic. Serine 17 bears the Phosphoserine mark. Residues 33–53 (ISVASIAAGIQFGWALQLSLL) traverse the membrane as a helical segment. Topologically, residues 54 to 67 (TPYVQLLGVPHKWP) are extracellular. Residues 68–88 (SFIWLCGPVSGLLVQPSVGYF) form a helical membrane-spanning segment. Over 89 to 100 (SDRCTSRFGRRR) the chain is Cytoplasmic. Residues 101–121 (PFIATGALLVAVSVVLIGYAA) form a helical membrane-spanning segment. Residues 122–138 (DFGHSMGDKIDKPVKMR) lie on the Extracellular side of the membrane. Residues 139-159 (AVVIFALGFWILDVANNTLQG) traverse the membrane as a helical segment. Residues 160–180 (PCRAFLGDLAAGDAQKTRTAN) are Cytoplasmic-facing. Residues 181–201 (AFFSFFMAVGNVLGYAAGSYT) form a helical membrane-spanning segment. The Extracellular segment spans residues 202–223 (NLYKIFPFTMTKACDIYCANLK). A helical transmembrane segment spans residues 224 to 244 (SCFFLSITLLLVVTIIALWYV). At 245–276 (EDKQWSPKADSDNEKTPFFGEIFGAFKVMKRP) the chain is on the cytoplasmic side. A helical transmembrane segment spans residues 277–297 (MWMLLIVTALNWIAWFPFLLY). At 298–323 (DTDWMGREVYGGDSKGDDKMKKLYNQ) the chain is on the extracellular side. A helical membrane pass occupies residues 324–344 (GIHVGALGLMLNSIVLGVMSL). Residues 345-358 (GIEGISRKMGGAKR) lie on the Cytoplasmic side of the membrane. Residues 359–379 (LWGAVNIILAVCLAMTVLVTK) form a helical membrane-spanning segment. Residues 380–402 (KAEEHRRIAGPMALPTDGIRAGA) lie on the Extracellular side of the membrane. Residues 403 to 423 (LTLFALLGIPLAITFSIPFAL) form a helical membrane-spanning segment. At 424-443 (ASIISSSSGAGQRLSLGVLN) the chain is on the cytoplasmic side. Residues 444–464 (MAIVIPQMIVSFGVGPIDALF) traverse the membrane as a helical segment. Topologically, residues 465–468 (GDGN) are extracellular. The helical transmembrane segment at 469 to 489 (LPGFVVGAIAAAVSSIVAFTV) threads the bilayer. Residues 490-491 (LP) are Cytoplasmic-facing.

This sequence belongs to the glycoside-pentoside-hexuronide (GPH) cation symporter transporter (TC 2.A.2.4) family. As to expression, expressed in anthers.

Its subcellular location is the cell membrane. It functions in the pathway glycan biosynthesis; sucrose metabolism. Its function is as follows. May be responsible for the transport of glucosides into the cell, with the concomitant uptake of protons (symport system). Does not seem to transport sucrose. This Arabidopsis thaliana (Mouse-ear cress) protein is Sucrose transport protein SUC7.